A 593-amino-acid chain; its full sequence is RNA-binding protein 47 (593 aa).

Residues 1 to 20 (MTAEDSTAAMSSDSAAGSSA) show a composition bias toward low complexity. The tract at residues 1-25 (MTAEDSTAAMSSDSAAGSSAKVPEG) is disordered. RRM domains are found at residues 71-149 (CEVF…CSVD), 151-233 (CRLF…WAEP), and 246-318 (KILY…LAKP). Omega-N-methylarginine is present on arginine 332. Asymmetric dimethylarginine; alternate occurs at positions 394 and 405. 2 positions are modified to omega-N-methylarginine; alternate: arginine 394 and arginine 405.

This sequence belongs to the RRM RBM47 family. As to quaternary structure, homodimer. Interacts with A1CF. Interacts with APOBEC1; form an mRNA editing complex. Interacts with RBPMS.

Its subcellular location is the nucleus. It localises to the cytoplasm. Its function is as follows. Single-stranded RNA-binding protein that functions in a variety of RNA processes, including alternative splicing, RNA stabilization, and RNA editing. Functions as an enzyme-substrate adapter for the cytidine deaminase APOBEC1. With APOBEC1 forms an mRNA editing complex involved into cytidine to uridine editing of a variety of mRNA molecules. Through the binding of their 3'UTR, also stabilizes a variety of mRNAs and regulates the expression of genes such as the interferon alpha/beta receptor and interleukin-10. Also involved in the alternative splicing of several genes including TJP1. Binds the pre-mRNA (U)GCAUG consensus sequences in downstream intronic regions of alternative exons, regulating their exclusion and inclusion into mRNAs. Independently of its RNA-binding activity, could negatively regulate MAVS by promoting its lysosomal degradation. In Homo sapiens (Human), this protein is RNA-binding protein 47.